Consider the following 224-residue polypeptide: GrpE protein homolog 2, mitochondrial (224 aa).

Residues 1 to 31 (MAARLLWAVRRRMQPLAAHAASEGRGWLHPF) constitute a mitochondrion transit peptide. N6-acetyllysine is present on Lys141.

The protein belongs to the GrpE family. As to quaternary structure, probable component of the PAM complex at least composed of a mitochondrial HSP70 protein, GRPEL1 or GRPEL2, TIMM44, TIMM16/PAM16 and TIMM14/DNAJC19.

The protein resides in the mitochondrion matrix. Its function is as follows. Essential component of the PAM complex, a complex required for the translocation of transit peptide-containing proteins from the inner membrane into the mitochondrial matrix in an ATP-dependent manner. Seems to control the nucleotide-dependent binding of mitochondrial HSP70 to substrate proteins. Stimulates ATPase activity of mt-HSP70. May also serve to modulate the interconversion of oligomeric (inactive) and monomeric (active) forms of mt-HSP70. This chain is GrpE protein homolog 2, mitochondrial (GRPEL2), found in Bos taurus (Bovine).